Here is a 294-residue protein sequence, read N- to C-terminus: tRNA dimethylallyltransferase (294 aa).

10–17 contributes to the ATP binding site; sequence GPTAVGKT. 12-17 contacts substrate; the sequence is TAVGKT. The interaction with substrate tRNA stretch occupies residues 35–38; it reads DSQQ.

The protein belongs to the IPP transferase family. As to quaternary structure, monomer. Requires Mg(2+) as cofactor.

It carries out the reaction adenosine(37) in tRNA + dimethylallyl diphosphate = N(6)-dimethylallyladenosine(37) in tRNA + diphosphate. Catalyzes the transfer of a dimethylallyl group onto the adenine at position 37 in tRNAs that read codons beginning with uridine, leading to the formation of N6-(dimethylallyl)adenosine (i(6)A). The sequence is that of tRNA dimethylallyltransferase from Streptococcus suis (strain 05ZYH33).